The primary structure comprises 211 residues: Pyridoxine/pyridoxamine 5'-phosphate oxidase (211 aa).

Substrate contacts are provided by residues 8-11 (RNEY) and Lys-66. FMN-binding positions include 61-66 (RVVLLK), 76-77 (FT), Lys-83, and Gln-105. Positions 123, 127, and 131 each coordinate substrate. FMN contacts are provided by residues 140–141 (QS) and Trp-184. A substrate-binding site is contributed by 190-192 (RLH). Arg-194 serves as a coordination point for FMN.

The protein belongs to the pyridoxamine 5'-phosphate oxidase family. Homodimer. Requires FMN as cofactor.

The enzyme catalyses pyridoxamine 5'-phosphate + O2 + H2O = pyridoxal 5'-phosphate + H2O2 + NH4(+). It carries out the reaction pyridoxine 5'-phosphate + O2 = pyridoxal 5'-phosphate + H2O2. It functions in the pathway cofactor metabolism; pyridoxal 5'-phosphate salvage; pyridoxal 5'-phosphate from pyridoxamine 5'-phosphate: step 1/1. The protein operates within cofactor metabolism; pyridoxal 5'-phosphate salvage; pyridoxal 5'-phosphate from pyridoxine 5'-phosphate: step 1/1. Functionally, catalyzes the oxidation of either pyridoxine 5'-phosphate (PNP) or pyridoxamine 5'-phosphate (PMP) into pyridoxal 5'-phosphate (PLP). The chain is Pyridoxine/pyridoxamine 5'-phosphate oxidase from Mannheimia succiniciproducens (strain KCTC 0769BP / MBEL55E).